The following is a 152-amino-acid chain: Superoxide dismutase [Cu-Zn] (152 aa).

H45, H47, and H62 together coordinate Cu cation. Cysteines 56 and 145 form a disulfide. Residues H62, H70, H79, and D82 each coordinate Zn(2+). Residue H119 participates in Cu cation binding.

This sequence belongs to the Cu-Zn superoxide dismutase family. As to quaternary structure, homodimer. It depends on Cu cation as a cofactor. Zn(2+) serves as cofactor.

The protein resides in the cytoplasm. The catalysed reaction is 2 superoxide + 2 H(+) = H2O2 + O2. Functionally, destroys radicals which are normally produced within the cells and which are toxic to biological systems. The polypeptide is Superoxide dismutase [Cu-Zn] (SODCC) (Panax ginseng (Korean ginseng)).